Reading from the N-terminus, the 419-residue chain is UDP-N-acetylglucosamine 1-carboxyvinyltransferase (419 aa).

Phosphoenolpyruvate is bound at residue 22–23; the sequence is KN. Arginine 91 contributes to the UDP-N-acetyl-alpha-D-glucosamine binding site. Cysteine 115 acts as the Proton donor in catalysis. Cysteine 115 carries the post-translational modification 2-(S-cysteinyl)pyruvic acid O-phosphothioketal. Residues 120-124, 160-163, aspartate 305, and isoleucine 327 contribute to the UDP-N-acetyl-alpha-D-glucosamine site; these read RPVDL and KVSV.

The protein belongs to the EPSP synthase family. MurA subfamily.

The protein resides in the cytoplasm. It catalyses the reaction phosphoenolpyruvate + UDP-N-acetyl-alpha-D-glucosamine = UDP-N-acetyl-3-O-(1-carboxyvinyl)-alpha-D-glucosamine + phosphate. The protein operates within cell wall biogenesis; peptidoglycan biosynthesis. Cell wall formation. Adds enolpyruvyl to UDP-N-acetylglucosamine. The polypeptide is UDP-N-acetylglucosamine 1-carboxyvinyltransferase (Tolumonas auensis (strain DSM 9187 / NBRC 110442 / TA 4)).